Consider the following 70-residue polypeptide: Large ribosomal subunit protein bL31 (70 aa).

4 residues coordinate Zn(2+): Cys-16, Cys-18, Cys-36, and Cys-39.

The protein belongs to the bacterial ribosomal protein bL31 family. Type A subfamily. In terms of assembly, part of the 50S ribosomal subunit. Requires Zn(2+) as cofactor.

In terms of biological role, binds the 23S rRNA. This is Large ribosomal subunit protein bL31 from Tolumonas auensis (strain DSM 9187 / NBRC 110442 / TA 4).